The following is a 174-amino-acid chain: Centrosomal protein 20 (174 aa).

Positions 1–104 (MATVAELKAV…AFEESKDNTI (104 aa)) are necessary and sufficient for homooligomerization and localization to centrosomes and pericentriolar satellites. The LisH domain maps to 49–81 (ENLLINELIREYLEFNKYKYTASVLIAESGQPV). Positions 129–174 (GPSLQPSDPSLGRQPSRRKPMDDHLRKEEQKSTNIEDLHVSQAVNR) are disordered. The residue at position 144 (serine 144) is a Phosphoserine. A compositionally biased stretch (basic and acidic residues) spans 147–167 (KPMDDHLRKEEQKSTNIEDLH).

This sequence belongs to the CEP43 family. As to quaternary structure, homooligomer; probably required for localization to centrosomes. Forms a complex with KIAA0753/OFIP and OFD1; within this complex may stabilize the interaction between OFD1 and KIAA0753/OFIP. Interacts with PCM1; this interaction may be mediated by KIAA0753/OFIP. Interacts with PLK1 in later G1, S, G2 and M phases of the cell cycle; this interaction recruits PLK1 to centrosomes. Widely expressed. Detected in brain, heart, kidney, liver, lung, skeletal muscle, placenta and intestine.

The protein localises to the cytoplasm. Its subcellular location is the cytoskeleton. It localises to the microtubule organizing center. The protein resides in the centrosome. It is found in the centriole. The protein localises to the cell projection. Its subcellular location is the cilium. It localises to the cilium basal body. The protein resides in the cytoplasmic granule. It is found in the centriolar satellite. In terms of biological role, involved in the biogenesis of cilia. Required for the recruitment of PLK1 to centrosomes and S phase progression. This is Centrosomal protein 20 from Homo sapiens (Human).